The following is a 340-amino-acid chain: Photosystem II assembly lipoprotein Ycf48 (340 aa).

Residues 1–26 (MTSVLGLLKPLKKAIAAIAVLVLCIG) form the signal peptide. A lipid anchor (N-palmitoyl cysteine) is attached at Cys27. Residue Cys27 is the site of S-diacylglycerol cysteine attachment.

Belongs to the Ycf48 family. In terms of assembly, part of early PSII assembly complexes which includes D1 (psbA) and PsbI; not found in mature PSII. Binds to the lumenal side of PSII complexes. Interacts with YidC.

It is found in the cellular thylakoid membrane. A factor required for optimal assembly of photosystem II (PSII), acting in the early stages of PSII assembly. Also plays a role in replacement of photodamaged D1 (psbA). Assists YidC in synthesis of chlorophyll-binding proteins. This chain is Photosystem II assembly lipoprotein Ycf48, found in Picosynechococcus sp. (strain ATCC 27264 / PCC 7002 / PR-6) (Agmenellum quadruplicatum).